We begin with the raw amino-acid sequence, 175 residues long: RNA pyrophosphohydrolase (175 aa).

Positions 6–149 (GYRPNVGIVI…KRDVYRRVMK (144 aa)) constitute a Nudix hydrolase domain. The Nudix box motif lies at 38 to 59 (GGINAGETAEQAMYRELFEEVG).

It belongs to the Nudix hydrolase family. RppH subfamily. A divalent metal cation is required as a cofactor.

In terms of biological role, accelerates the degradation of transcripts by removing pyrophosphate from the 5'-end of triphosphorylated RNA, leading to a more labile monophosphorylated state that can stimulate subsequent ribonuclease cleavage. This chain is RNA pyrophosphohydrolase, found in Sodalis glossinidius (strain morsitans).